Here is a 197-residue protein sequence, read N- to C-terminus: dCTP deaminase (197 aa).

DCTP is bound by residues 110-115 (RSSLAR), Asp-128, 136-138 (VLE), Tyr-171, and Gln-182. The Proton donor/acceptor role is filled by Glu-138.

Belongs to the dCTP deaminase family. Homotrimer.

It catalyses the reaction dCTP + H2O + H(+) = dUTP + NH4(+). It functions in the pathway pyrimidine metabolism; dUMP biosynthesis; dUMP from dCTP (dUTP route): step 1/2. Its function is as follows. Catalyzes the deamination of dCTP to dUTP. The chain is dCTP deaminase from Alteromonas mediterranea (strain DSM 17117 / CIP 110805 / LMG 28347 / Deep ecotype).